An 876-amino-acid polypeptide reads, in one-letter code: Valine--tRNA ligase (876 aa).

The 'HIGH' region motif lies at 43-53; it reads PNVTGVLHMGH. Residues 534-538 carry the 'KMSKS' region motif; that stretch reads KMSKS. K537 contacts ATP. A coiled-coil region spans residues 847-876; sequence PEKVVAIEKAKKADAEAKIEALKASLKSLS.

This sequence belongs to the class-I aminoacyl-tRNA synthetase family. ValS type 1 subfamily. Monomer.

It is found in the cytoplasm. It carries out the reaction tRNA(Val) + L-valine + ATP = L-valyl-tRNA(Val) + AMP + diphosphate. Its function is as follows. Catalyzes the attachment of valine to tRNA(Val). As ValRS can inadvertently accommodate and process structurally similar amino acids such as threonine, to avoid such errors, it has a 'posttransfer' editing activity that hydrolyzes mischarged Thr-tRNA(Val) in a tRNA-dependent manner. The chain is Valine--tRNA ligase from Christiangramia forsetii (strain DSM 17595 / CGMCC 1.15422 / KT0803) (Gramella forsetii).